Consider the following 121-residue polypeptide: Large ribosomal subunit protein eL34A (121 aa).

The protein belongs to the eukaryotic ribosomal protein eL34 family. In terms of assembly, component of the large ribosomal subunit (LSU). Mature yeast ribosomes consist of a small (40S) and a large (60S) subunit. The 40S small subunit contains 1 molecule of ribosomal RNA (18S rRNA) and 33 different proteins (encoded by 57 genes). The large 60S subunit contains 3 rRNA molecules (25S, 5.8S and 5S rRNA) and 46 different proteins (encoded by 81 genes).

The protein resides in the cytoplasm. Functionally, component of the ribosome, a large ribonucleoprotein complex responsible for the synthesis of proteins in the cell. The small ribosomal subunit (SSU) binds messenger RNAs (mRNAs) and translates the encoded message by selecting cognate aminoacyl-transfer RNA (tRNA) molecules. The large subunit (LSU) contains the ribosomal catalytic site termed the peptidyl transferase center (PTC), which catalyzes the formation of peptide bonds, thereby polymerizing the amino acids delivered by tRNAs into a polypeptide chain. The nascent polypeptides leave the ribosome through a tunnel in the LSU and interact with protein factors that function in enzymatic processing, targeting, and the membrane insertion of nascent chains at the exit of the ribosomal tunnel. This is Large ribosomal subunit protein eL34A from Saccharomyces cerevisiae (strain ATCC 204508 / S288c) (Baker's yeast).